We begin with the raw amino-acid sequence, 427 residues long: Probable G-protein coupled receptor 150 (427 aa).

Residues 1-3 (MED) are Extracellular-facing. The chain crosses the membrane as a helical span at residues 4–24 (PFSLAILNPASNLSVPTQPSW). The Cytoplasmic segment spans residues 25–50 (SLNLTSEQGASVPGPHSPPRGPPSHR). The helical transmembrane segment at 51-71 (IHLVFLGIILVAAVAGNTTVL) threads the bilayer. Topologically, residues 72 to 89 (CRLCGGSSGPWPGPKRRK) are extracellular. A helical membrane pass occupies residues 90-110 (MDFLLVQLAAADLYASGGTAL). The Cytoplasmic portion of the chain corresponds to 111-170 (SQLAWELLGDPRPALGDLACRLSHLLQASGRGASAHLVALIALERQLAVRIPQGPQLPAR). The chain crosses the membrane as a helical span at residues 171–191 (ALAALSWLLALLLALPPTFVV). Residues 192 to 230 (RWDAPPSSTANAWPGKHCCRGIFAPLPRWHLQVYALYEA) are Extracellular-facing. Residues 231 to 251 (IVGFAAPVALLGFSCGHLLCV) form a helical membrane-spanning segment. Over 252 to 286 (WWQRGSQAPVARMPWSPSMARASLPSALPQAKVQS) the chain is Cytoplasmic. The chain crosses the membrane as a helical span at residues 287-307 (LKMSLALALLFVGCDLPYFAA). At 308-327 (RLAAAWSSKPAGDWERESLV) the chain is on the extracellular side. A helical transmembrane segment spans residues 328–348 (AAMRVLEVANSAINPLIYLFF). The Cytoplasmic segment spans residues 349–427 (QAGDCRLWRR…PPPCSCESAF (79 aa)). The tract at residues 402–427 (EERNQGCLRPPPPRPRPPPCSCESAF) is disordered. The segment covering 410–421 (RPPPPRPRPPPC) has biased composition (pro residues).

This sequence belongs to the G-protein coupled receptor 1 family.

It is found in the cell membrane. Orphan receptor. In Mus musculus (Mouse), this protein is Probable G-protein coupled receptor 150 (Gpr150).